The primary structure comprises 340 residues: UDP-3-O-(3-hydroxymyristoyl)glucosamine N-acyltransferase (340 aa).

Residue His239 is the Proton acceptor of the active site.

This sequence belongs to the transferase hexapeptide repeat family. LpxD subfamily. As to quaternary structure, homotrimer.

The catalysed reaction is a UDP-3-O-[(3R)-3-hydroxyacyl]-alpha-D-glucosamine + a (3R)-hydroxyacyl-[ACP] = a UDP-2-N,3-O-bis[(3R)-3-hydroxyacyl]-alpha-D-glucosamine + holo-[ACP] + H(+). It carries out the reaction UDP-3-O-[(3R)-3-hydroxytetradecanoyl]-alpha-D-glucosamine + (3R)-hydroxytetradecanoyl-[ACP] = UDP-2-N,3-O-bis[(3R)-3-hydroxytetradecanoyl]-alpha-D-glucosamine + holo-[ACP] + H(+). It participates in glycolipid biosynthesis; lipid IV(A) biosynthesis; lipid IV(A) from (3R)-3-hydroxytetradecanoyl-[acyl-carrier-protein] and UDP-N-acetyl-alpha-D-glucosamine: step 3/6. Catalyzes the N-acylation of UDP-3-O-(hydroxytetradecanoyl)glucosamine using 3-hydroxytetradecanoyl-ACP as the acyl donor. Is involved in the biosynthesis of lipid A, a phosphorylated glycolipid that anchors the lipopolysaccharide to the outer membrane of the cell. The protein is UDP-3-O-(3-hydroxymyristoyl)glucosamine N-acyltransferase of Pectobacterium atrosepticum (strain SCRI 1043 / ATCC BAA-672) (Erwinia carotovora subsp. atroseptica).